Here is a 56-residue protein sequence, read N- to C-terminus: Large ribosomal subunit protein bL33B (56 aa).

Belongs to the bacterial ribosomal protein bL33 family.

In Cutibacterium acnes (strain DSM 16379 / KPA171202) (Propionibacterium acnes), this protein is Large ribosomal subunit protein bL33B.